The chain runs to 207 residues: LexA repressor (207 aa).

The segment at residues 28 to 48 (VREIGEAVGLASSSTVHGHLA) is a DNA-binding region (H-T-H motif). Catalysis depends on for autocatalytic cleavage activity residues serine 129 and lysine 167.

The protein belongs to the peptidase S24 family. In terms of assembly, homodimer.

The enzyme catalyses Hydrolysis of Ala-|-Gly bond in repressor LexA.. Functionally, represses a number of genes involved in the response to DNA damage (SOS response), including recA and lexA. In the presence of single-stranded DNA, RecA interacts with LexA causing an autocatalytic cleavage which disrupts the DNA-binding part of LexA, leading to derepression of the SOS regulon and eventually DNA repair. This Geobacillus thermodenitrificans (strain NG80-2) protein is LexA repressor.